A 397-amino-acid polypeptide reads, in one-letter code: Ribosomal RNA large subunit methyltransferase I (397 aa).

Residues 2-79 (TAAIYLVKGR…KEEINKAFFV (78 aa)) form the PUA domain.

It belongs to the methyltransferase superfamily. RlmI family.

The protein localises to the cytoplasm. The catalysed reaction is cytidine(1962) in 23S rRNA + S-adenosyl-L-methionine = 5-methylcytidine(1962) in 23S rRNA + S-adenosyl-L-homocysteine + H(+). In terms of biological role, specifically methylates the cytosine at position 1962 (m5C1962) of 23S rRNA. This is Ribosomal RNA large subunit methyltransferase I from Vibrio campbellii (strain ATCC BAA-1116).